A 326-amino-acid chain; its full sequence is L-lactate dehydrogenase (326 aa).

An NAD(+)-binding site is contributed by 39–60; that stretch reads DVVTGMPEGKALDDSQATSIAD. Positions 99, 131, and 162 each coordinate substrate. An NAD(+)-binding site is contributed by Asn-131. The active-site Proton acceptor is His-186.

The protein belongs to the LDH/MDH superfamily. LDH family. In terms of assembly, homotetramer.

The catalysed reaction is (S)-lactate + NAD(+) = pyruvate + NADH + H(+). Its pathway is fermentation; pyruvate fermentation to lactate; (S)-lactate from pyruvate: step 1/1. This is L-lactate dehydrogenase from Toxoplasma gondii.